Consider the following 520-residue polypeptide: Dynein axonemal assembly factor 8 (520 aa).

Disordered stretches follow at residues 93-202 (PVLV…LRQE), 217-256 (RDAC…EGPP), 328-366 (CARK…QLAQ), and 388-520 (DHLS…LEQL). The segment covering 111–125 (RTKDASSQEGRDPGR) has biased composition (basic and acidic residues). Phosphoserine is present on S161. S351 carries the phosphoserine modification. Acidic residues predominate over residues 401-410 (DSEEEEEEEM). Residues 420–437 (SPSSLGLRTCTGKSQLLQ) show a composition bias toward polar residues.

Expressed in respiratory ciliated cells (at protein level).

Its subcellular location is the dynein axonemal particle. It is found in the cytoplasm. In terms of biological role, in cyliated cells, dynein axonemal particle-specific protein required for deployment of ODA to the axoneme. Interacts with outer dynein arm (ODA) subunits. The polypeptide is Dynein axonemal assembly factor 8 (Homo sapiens (Human)).